We begin with the raw amino-acid sequence, 284 residues long: Efem/EfeO family lipoprotein (284 aa).

The N-terminal stretch at 1–17 is a signal peptide; the sequence is MKKLTTLLLASTLLIAA. C18 carries N-palmitoyl cysteine lipidation. C18 carries the S-diacylglycerol cysteine lipid modification.

The protein belongs to the EfeM/EfeO family.

It is found in the cell membrane. This Staphylococcus aureus (strain NCTC 8325 / PS 47) protein is Efem/EfeO family lipoprotein.